Here is a 313-residue protein sequence, read N- to C-terminus: Aspartate carbamoyltransferase catalytic subunit (313 aa).

Residues Arg-58 and Thr-59 each coordinate carbamoyl phosphate. Position 86 (Lys-86) interacts with L-aspartate. Carbamoyl phosphate-binding residues include Arg-108, His-136, and Gln-139. 2 residues coordinate L-aspartate: Arg-169 and Arg-223. Carbamoyl phosphate contacts are provided by Gly-265 and Pro-266.

This sequence belongs to the aspartate/ornithine carbamoyltransferase superfamily. ATCase family. As to quaternary structure, heterododecamer (2C3:3R2) of six catalytic PyrB chains organized as two trimers (C3), and six regulatory PyrI chains organized as three dimers (R2).

The enzyme catalyses carbamoyl phosphate + L-aspartate = N-carbamoyl-L-aspartate + phosphate + H(+). It participates in pyrimidine metabolism; UMP biosynthesis via de novo pathway; (S)-dihydroorotate from bicarbonate: step 2/3. Catalyzes the condensation of carbamoyl phosphate and aspartate to form carbamoyl aspartate and inorganic phosphate, the committed step in the de novo pyrimidine nucleotide biosynthesis pathway. This chain is Aspartate carbamoyltransferase catalytic subunit, found in Anaeromyxobacter sp. (strain K).